Consider the following 444-residue polypeptide: Tubulin beta-2 chain (444 aa).

GTP-binding residues include Gln-11, Glu-69, Ser-138, Gly-142, Thr-143, Gly-144, Asn-204, and Asn-226. Glu-69 provides a ligand contact to Mg(2+). A disordered region spans residues 422–444; that stretch reads YQQYQDATAEEDDYDDGEGSTGD. Residues 429–444 are compositionally biased toward acidic residues; the sequence is TAEEDDYDDGEGSTGD.

This sequence belongs to the tubulin family. Dimer of alpha and beta chains. A typical microtubule is a hollow water-filled tube with an outer diameter of 25 nm and an inner diameter of 15 nM. Alpha-beta heterodimers associate head-to-tail to form protofilaments running lengthwise along the microtubule wall with the beta-tubulin subunit facing the microtubule plus end conferring a structural polarity. Microtubules usually have 13 protofilaments but different protofilament numbers can be found in some organisms and specialized cells. Requires Mg(2+) as cofactor. As to expression, found in areas of rapidly dividing tissues.

It localises to the cytoplasm. The protein localises to the cytoskeleton. Functionally, tubulin is the major constituent of microtubules, a cylinder consisting of laterally associated linear protofilaments composed of alpha- and beta-tubulin heterodimers. Microtubules grow by the addition of GTP-tubulin dimers to the microtubule end, where a stabilizing cap forms. Below the cap, tubulin dimers are in GDP-bound state, owing to GTPase activity of alpha-tubulin. The chain is Tubulin beta-2 chain (TUBB2) from Daucus carota (Wild carrot).